A 792-amino-acid chain; its full sequence is Ribosome biogenesis protein BOP1 homolog (792 aa).

Basic residues predominate over residues 1-11 (MTKKRTVKRKV). A disordered region spans residues 1–167 (MTKKRTVKRK…ESDTSDEEDI (167 aa)). Composition is skewed to acidic residues over residues 44-53 (EDTTDDEGID), 60-72 (SSED…DEEG), 82-117 (EAEE…ESDA), and 157-166 (EESDTSDEED). 7 WD repeats span residues 453-494 (GHTD…RTIE), 496-534 (NDVV…KLLI), 578-620 (THFK…SQIP), 623-661 (KSKG…LIKK), 664-703 (TNSK…KPYQ), 707-746 (LHRN…DLLQ), and 762-792 (RDEF…RLYT).

This sequence belongs to the WD repeat BOP1/ERB1 family.

It is found in the nucleus. It localises to the nucleolus. The protein localises to the nucleoplasm. Required for maturation of ribosomal RNAs and formation of the large ribosomal subunit. The polypeptide is Ribosome biogenesis protein BOP1 homolog (Drosophila mojavensis (Fruit fly)).